The chain runs to 471 residues: Glutamate--tRNA ligase (471 aa).

Residues 9–19 (PSPTGYLHVGG) carry the 'HIGH' region motif. Cys98, Cys100, Cys125, and His127 together coordinate Zn(2+). The 'KMSKS' region motif lies at 237–241 (KLSKR). ATP is bound at residue Lys240.

It belongs to the class-I aminoacyl-tRNA synthetase family. Glutamate--tRNA ligase type 1 subfamily. In terms of assembly, monomer. Requires Zn(2+) as cofactor.

It localises to the cytoplasm. It carries out the reaction tRNA(Glu) + L-glutamate + ATP = L-glutamyl-tRNA(Glu) + AMP + diphosphate. Functionally, catalyzes the attachment of glutamate to tRNA(Glu) in a two-step reaction: glutamate is first activated by ATP to form Glu-AMP and then transferred to the acceptor end of tRNA(Glu). The protein is Glutamate--tRNA ligase of Escherichia coli O9:H4 (strain HS).